A 682-amino-acid polypeptide reads, in one-letter code: 1,4-alpha-glucan-branching enzyme (682 aa).

(1,4-alpha-D-glucosyl)n contacts are provided by W88 and K124. D342 (nucleophile) is an active-site residue. Catalysis depends on E397, which acts as the Proton donor.

Belongs to the glycosyl hydrolase 13 family. GlgB subfamily.

It localises to the cytoplasm. It catalyses the reaction Transfers a segment of a (1-&gt;4)-alpha-D-glucan chain to a primary hydroxy group in a similar glucan chain.. It participates in glycan biosynthesis; glycogen biosynthesis. Glycogen-branching enzyme participates in the glycogen biosynthetic process along with glycogenin and glycogen synthase. Generates alpha-1,6-glucosidic branches from alpha-1,4-linked glucose chains, to increase solubility of the glycogen polymer. This is 1,4-alpha-glucan-branching enzyme from Cryptococcus neoformans var. grubii serotype A (strain H99 / ATCC 208821 / CBS 10515 / FGSC 9487) (Filobasidiella neoformans var. grubii).